The sequence spans 666 residues: tRNA 5-methylaminomethyl-2-thiouridine biosynthesis bifunctional protein MnmC (666 aa).

Positions 1–245 (MKQYAIQPAT…KREMLCGVME (245 aa)) are tRNA (mnm(5)s(2)U34)-methyltransferase. The segment at 270–666 (IGGGIASALL…RKLLKGKAVK (397 aa)) is FAD-dependent cmnm(5)s(2)U34 oxidoreductase.

This sequence in the N-terminal section; belongs to the methyltransferase superfamily. tRNA (mnm(5)s(2)U34)-methyltransferase family. It in the C-terminal section; belongs to the DAO family. Requires FAD as cofactor.

It is found in the cytoplasm. It catalyses the reaction 5-aminomethyl-2-thiouridine(34) in tRNA + S-adenosyl-L-methionine = 5-methylaminomethyl-2-thiouridine(34) in tRNA + S-adenosyl-L-homocysteine + H(+). Catalyzes the last two steps in the biosynthesis of 5-methylaminomethyl-2-thiouridine (mnm(5)s(2)U) at the wobble position (U34) in tRNA. Catalyzes the FAD-dependent demodification of cmnm(5)s(2)U34 to nm(5)s(2)U34, followed by the transfer of a methyl group from S-adenosyl-L-methionine to nm(5)s(2)U34, to form mnm(5)s(2)U34. This Salmonella arizonae (strain ATCC BAA-731 / CDC346-86 / RSK2980) protein is tRNA 5-methylaminomethyl-2-thiouridine biosynthesis bifunctional protein MnmC.